The sequence spans 558 residues: Potassium-transporting ATPase potassium-binding subunit (558 aa).

Helical transmembrane passes span 1 to 21, 66 to 86, 127 to 147, 166 to 186, 245 to 265, 281 to 301, 327 to 347, 354 to 374, 377 to 397, 416 to 436, 482 to 502, and 531 to 551; these read MEII…SGYL, FNGF…WLFL, MIVM…VCIA, IVRF…ILLM, IWSD…MLFL, ALIL…LTMW, FGAG…TGSV, LTPL…VFGG, VGLM…SLMV, IVLV…LAFM, ISTG…QLLI, and IVFI…LGPI.

The protein belongs to the KdpA family. As to quaternary structure, the system is composed of three essential subunits: KdpA, KdpB and KdpC.

It localises to the cell membrane. Part of the high-affinity ATP-driven potassium transport (or Kdp) system, which catalyzes the hydrolysis of ATP coupled with the electrogenic transport of potassium into the cytoplasm. This subunit binds the extracellular potassium ions and delivers the ions to the membrane domain of KdpB through an intramembrane tunnel. The polypeptide is Potassium-transporting ATPase potassium-binding subunit (Staphylococcus aureus (strain bovine RF122 / ET3-1)).